We begin with the raw amino-acid sequence, 186 residues long: Elongation factor P (186 aa).

It belongs to the elongation factor P family.

Its subcellular location is the cytoplasm. Its pathway is protein biosynthesis; polypeptide chain elongation. Functionally, involved in peptide bond synthesis. Stimulates efficient translation and peptide-bond synthesis on native or reconstituted 70S ribosomes in vitro. Probably functions indirectly by altering the affinity of the ribosome for aminoacyl-tRNA, thus increasing their reactivity as acceptors for peptidyl transferase. The polypeptide is Elongation factor P (Shewanella denitrificans (strain OS217 / ATCC BAA-1090 / DSM 15013)).